Here is a 620-residue protein sequence, read N- to C-terminus: Ferric/cupric reductase transmembrane component 7 (620 aa).

Topologically, residues methionine 1–lysine 45 are extracellular. A helical transmembrane segment spans residues phenylalanine 46 to methionine 66. Residues tyrosine 67–lysine 107 lie on the Cytoplasmic side of the membrane. A helical transmembrane segment spans residues phenylalanine 108–valine 128. The Extracellular segment spans residues methionine 129 to serine 167. The region spanning alanine 161 to glycine 320 is the Ferric oxidoreductase domain. The chain crosses the membrane as a helical span at residues leucine 168–leucine 188. At serine 189 to asparagine 194 the chain is on the cytoplasmic side. Residues isoleucine 195–phenylalanine 215 traverse the membrane as a helical segment. Heme contacts are provided by histidine 197 and histidine 211. The Extracellular segment spans residues leucine 216 to methionine 237. A helical membrane pass occupies residues tryptophan 238–isoleucine 258. Topologically, residues alanine 259–glutamate 265 are cytoplasmic. Residues isoleucine 266–valine 286 form a helical membrane-spanning segment. The heme site is built by histidine 271 and histidine 285. Residues tyrosine 287–serine 292 lie on the Extracellular side of the membrane. The helical transmembrane segment at histidine 293–valine 313 threads the bilayer. Topologically, residues lysine 314–tyrosine 620 are cytoplasmic. Residues arginine 321–aspartate 419 form the FAD-binding FR-type domain. Position 369-375 (histidine 369–proline 375) interacts with FAD. Residue glycine 411–glycine 414 coordinates NADP(+). The interval serine 519–threonine 543 is disordered. The segment covering aspartate 523–glutamate 532 has biased composition (basic and acidic residues). An NADP(+)-binding site is contributed by cysteine 578–phenylalanine 579.

The protein belongs to the ferric reductase (FRE) family. It depends on FAD as a cofactor.

It is found in the cell membrane. It catalyses the reaction 2 a Fe(II)-siderophore + NADP(+) + H(+) = 2 a Fe(III)-siderophore + NADPH. Its function is as follows. Cell surface metalloreductase. May be involved in copper homeostasis. The sequence is that of Ferric/cupric reductase transmembrane component 7 (FRE7) from Saccharomyces cerevisiae (strain ATCC 204508 / S288c) (Baker's yeast).